Reading from the N-terminus, the 270-residue chain is 5'-nucleotidase SurE (270 aa).

Positions 8, 9, 40, and 98 each coordinate a divalent metal cation.

This sequence belongs to the SurE nucleotidase family. The cofactor is a divalent metal cation.

It is found in the cytoplasm. The catalysed reaction is a ribonucleoside 5'-phosphate + H2O = a ribonucleoside + phosphate. In terms of biological role, nucleotidase that shows phosphatase activity on nucleoside 5'-monophosphates. This chain is 5'-nucleotidase SurE, found in Cyanothece sp. (strain PCC 7425 / ATCC 29141).